We begin with the raw amino-acid sequence, 481 residues long: MRALPLTIGTIHFVGIGGIGMSGIAEVLHNLGYAVQGSDISDNQNVRRLREAGIQVMIGHDAANLGTAQVVVISSAVGRDNPEVAAARAKLIPVVRRAEMLAELMRLKWAVAVGGTHGKTTTTSLIAAVLEAAQLDPTVINGGIINAYGTNTRLGAGEWMVVEADESDGSFLRLPAVIAVVTNMDPEHLDHWGTAEAMEAGYQQFVSNIPFYGFAVLCIDHPTVQKMIPQLSDHRIITYGFSPQADVRAERINTDKFGATFEVVITDRQTRRTRRTPPLRLPMLGEHNIANTLAAIAVAVEMGISDSVLQSAFASFKGVKRRFTKTGETGGITIIDDYGHHPVEIAAVLRAARQAGARDVIAVVQPHRYSRLASLFNEFCTCMNDAGTVIVADVYNAGESPIEGVDRDSLVDGLRTSGHKSVVPLPGPEHLAEMIHAIARPGDFVVCLGAGNITAWAQTLPEELATLQAKSSKIRRTGSGG.

115 to 121 (GTHGKTT) is a binding site for ATP.

It belongs to the MurCDEF family.

It localises to the cytoplasm. It carries out the reaction UDP-N-acetyl-alpha-D-muramate + L-alanine + ATP = UDP-N-acetyl-alpha-D-muramoyl-L-alanine + ADP + phosphate + H(+). Its pathway is cell wall biogenesis; peptidoglycan biosynthesis. In terms of biological role, cell wall formation. This is UDP-N-acetylmuramate--L-alanine ligase from Granulibacter bethesdensis (strain ATCC BAA-1260 / CGDNIH1).